The chain runs to 194 residues: Peptidyl-tRNA hydrolase (194 aa).

Y17 contributes to the tRNA binding site. The Proton acceptor role is filled by H22. Y68, N70, and N116 together coordinate tRNA.

Belongs to the PTH family. In terms of assembly, monomer.

It is found in the cytoplasm. It catalyses the reaction an N-acyl-L-alpha-aminoacyl-tRNA + H2O = an N-acyl-L-amino acid + a tRNA + H(+). In terms of biological role, hydrolyzes ribosome-free peptidyl-tRNAs (with 1 or more amino acids incorporated), which drop off the ribosome during protein synthesis, or as a result of ribosome stalling. Catalyzes the release of premature peptidyl moieties from peptidyl-tRNA molecules trapped in stalled 50S ribosomal subunits, and thus maintains levels of free tRNAs and 50S ribosomes. This is Peptidyl-tRNA hydrolase from Pseudomonas fluorescens (strain SBW25).